Here is a 467-residue protein sequence, read N- to C-terminus: Argininosuccinate lyase (467 aa).

It belongs to the lyase 1 family. Argininosuccinate lyase subfamily.

The protein resides in the cytoplasm. The catalysed reaction is 2-(N(omega)-L-arginino)succinate = fumarate + L-arginine. It functions in the pathway amino-acid biosynthesis; L-arginine biosynthesis; L-arginine from L-ornithine and carbamoyl phosphate: step 3/3. The chain is Argininosuccinate lyase from Rhizobium etli (strain ATCC 51251 / DSM 11541 / JCM 21823 / NBRC 15573 / CFN 42).